The following is a 577-amino-acid chain: Zinc finger protein 384 (577 aa).

The disordered stretch occupies residues 171 to 225 (TLTEEGGGGGGGGGSVAPKPPRGRKKKRMLESGLPEMNDPYVLSPEDDDDHQKDG). A compositionally biased stretch (gly residues) spans 175-185 (EGGGGGGGGGS). A Phosphoserine modification is found at Ser214. C2H2-type zinc fingers lie at residues 228-250 (YRCR…SKSH), 256-278 (HKCP…IRIH), 284-306 (YSCN…TRIH), 317-339 (HKCP…LRIH), 345-367 (YNCS…TRIH), 373-397 (YKCA…RRQH), 403-425 (FKCH…LSTH), and 433-455 (YTCT…MRKH). A compositionally biased stretch (low complexity) spans 501-515 (QQQQQQQQQQQQQQQ). A disordered region spans residues 501–550 (QQQQQQQQQQQQQQQQPPPHFQSPGAAPQGGGGGDSNPNPPPQCSFDLTP).

The protein belongs to the krueppel C2H2-type zinc-finger protein family. Interacts with BCAR1.

It localises to the nucleus. In terms of biological role, transcription factor that binds the consensus DNA sequence [GC]AAAAA. Seems to bind and regulate the promoters of MMP1, MMP3, MMP7 and COL1A1. In Homo sapiens (Human), this protein is Zinc finger protein 384 (ZNF384).